The primary structure comprises 153 residues: Nucleoside diphosphate kinase (153 aa).

Position 2 is an N-acetylalanine (Ala2). ATP is bound by residues Lys13, Phe61, Arg89, Thr95, Arg106, and Asn116. His119 functions as the Pros-phosphohistidine intermediate in the catalytic mechanism. Ser126 carries the phosphoserine modification.

It belongs to the NDK family. In terms of assembly, homohexamer. It depends on Mg(2+) as a cofactor.

Its subcellular location is the cytoplasm. It is found in the cytoskeleton. The enzyme catalyses a 2'-deoxyribonucleoside 5'-diphosphate + ATP = a 2'-deoxyribonucleoside 5'-triphosphate + ADP. It catalyses the reaction a ribonucleoside 5'-diphosphate + ATP = a ribonucleoside 5'-triphosphate + ADP. In terms of biological role, major role in the synthesis of nucleoside triphosphates other than ATP. The ATP gamma phosphate is transferred to the NDP beta phosphate via a ping-pong mechanism, using a phosphorylated active-site intermediate. This is Nucleoside diphosphate kinase (awd) from Drosophila melanogaster (Fruit fly).